The chain runs to 196 residues: 3-dehydroquinate dehydratase (196 aa).

3-dehydroquinate contacts are provided by residues 23 to 25 (ELR) and arginine 45. The active-site Proton donor/acceptor is the histidine 98. The active-site Schiff-base intermediate with substrate is the lysine 122. The 3-dehydroquinate site is built by arginine 159 and glutamine 182.

The protein belongs to the type-I 3-dehydroquinase family. In terms of assembly, homodimer.

The enzyme catalyses 3-dehydroquinate = 3-dehydroshikimate + H2O. The protein operates within metabolic intermediate biosynthesis; chorismate biosynthesis; chorismate from D-erythrose 4-phosphate and phosphoenolpyruvate: step 3/7. In terms of biological role, involved in the third step of the chorismate pathway, which leads to the biosynthesis of aromatic amino acids. Catalyzes the cis-dehydration of 3-dehydroquinate (DHQ) and introduces the first double bond of the aromatic ring to yield 3-dehydroshikimate. This chain is 3-dehydroquinate dehydratase, found in Archaeoglobus fulgidus (strain ATCC 49558 / DSM 4304 / JCM 9628 / NBRC 100126 / VC-16).